Reading from the N-terminus, the 1927-residue chain is Immunoglobulin A1 protease (1927 aa).

Positions 1-42 (MEKYFGEKQERFSFRKLSVGLVSATISSLFFMSVLASSSVDA) are cleaved as a signal peptide. A propeptide spanning residues 43-99 (QETAGVHYKYVADSELSSEEKKQLVYDIPTYVENDDETYYLVYKLNSQNQLAELPNT) is cleaved from the precursor. Residues 96–100 (LPNTG) carry the LPXTG sorting signal motif. T99 bears the Pentaglycyl murein peptidoglycan amidated threonine mark. The next 2 membrane-spanning stretches (helical) occupy residues 106 to 125 (QALV…FAVS) and 132 to 154 (KTVL…VHAL). The Extracellular segment spans residues 155–1927 (ENHLLLNYNT…FRRSIFENKK (1773 aa)). Residues 235 to 246 (QEQTPVSSTKPT) are compositionally biased toward polar residues. 3 disordered regions span residues 235–305 (QEQT…NPQD), 371–394 (SREI…TKKT), and 426–640 (EAVV…PEKT). The segment covering 276-296 (LAEHKNLETKKEEKISPKEKT) has biased composition (basic and acidic residues). The 80-residue stretch at 314 to 393 (KPELLYREET…PRIVEKGTKK (80 aa)) folds into the G5 domain. 3 repeat units span residues 419-435 (AIQP…KGEP), 436-452 (EVQP…KGEP), and 453-469 (AVQP…KGEP). The tract at residues 419–469 (AIQPELPEAVVSDKGEPEVQPTLPEAVVTDKGEPAVQPELPEAVVSDKGEP) is 3 X 17 AA approximate tandem repeats. The span at 485-511 (VKPETPVEKTKEQGPEKTEEVPVKPTE) shows a compositional bias: basic and acidic residues. 3 stretches are compositionally biased toward polar residues: residues 516 to 529 (NPNE…SIQG), 538 to 559 (EDTQ…SNKP), and 568 to 606 (ESNQ…STED). Residues 609–619 (TKSNTSNSNGN) show a composition bias toward low complexity. The span at 620–640 (EEIKQENELDPDKKVEDPEKT) shows a compositional bias: basic and acidic residues. H1565 contributes to the Zn(2+) binding site. The active site involves E1566. Residues H1569 and E1589 each contribute to the Zn(2+) site.

The protein belongs to the peptidase M26 family. The cofactor is Zn(2+). The Gram-positive cell-wall anchor motif LPXTG is located in the N-terminal part, in contrast to such motifs in other known streptococcal and staphylococcal proteins. The protease could be cleaved by the sortase and anchored in the membrane via the two potential N-terminal transmembrane domains, whereas the propeptide located prior to the LPXTG motif would remain attached to the cell wall peptidoglycan by an amide bond.

It localises to the secreted. The protein resides in the cell wall. It is found in the membrane. It catalyses the reaction Cleavage of Pro-|-Thr bond in the hinge region of the heavy chain of human IgA.. Zinc metalloproteinase which cleaves human immunoglobulin A1 (IgA1) in the hinge region, rendering it less efficient in coating the surface of colonizing or invading pneumococci. May be responsible for pneumococcal infection and is potentially involved in distinct stages of pneumococcal disease. The chain is Immunoglobulin A1 protease (iga) from Streptococcus pneumoniae.